The primary structure comprises 338 residues: Decarboxylase macB (338 aa).

Zn(2+) contacts are provided by His7, His9, His159, and Asp283.

The protein belongs to the metallo-dependent hydrolases superfamily. ACMSD family.

The enzyme catalyses 6-methylsalicylate + H(+) = 3-methylphenol + CO2. It participates in secondary metabolite biosynthesis; terpenoid biosynthesis. In terms of biological role, decarboxylase; part of the gene cluster that mediates the biosynthesis of macrophorins, isoprenoid epoxycyclohexenones containing cyclized drimane moieties. The first step of the pathway is the synthesis of 6-methylsalicylic acid (6-MSA) by the polyketide synthase macA. 6-MSA is then converted to m-cresol by the decarboxylase macB. The cytochrome P450 monooxygenase macC then catalyzes the oxidation of m-cresol to toluquinol. Epoxidation of toluquinol is then performed by the short chain dehydrogenase macD, with the help of macE, and a further prenylation by macG leads to 7-deacetoxyyanuthone A. The next step is the hydroxylation of C-22 of 7-deacetoxyyanuthone A by the cytochrome P450 monooxygenase macH to yield 22-deacetylyanuthone A. O-Mevalon transferase macI then attaches mevalon to the hydroxyl group of 22-deacetylyanuthone A to produce yanuthone E. The terpene cyclase macJ catalyzes the cyclization of 22-deacetylyanuthone A to macrophorin A. MacJ is also able to catalyze cyclization of yanuthone E and 7-deacetoxyyanuthone A to their corresponding macrophorins. The macJ products can be further modified by macH and macJ, as well as by the FAD-dependent monooxygenase macF, to produce additional macrophorins, including 4'-oxomacrophorin A, 4'-oxomacrophorin D and 4'-oxomacrophorin E. This Penicillium terrestre protein is Decarboxylase macB.